Here is a 405-residue protein sequence, read N- to C-terminus: S-adenosylmethionine synthase (405 aa).

139–144 (GQGSVD) contributes to the ATP binding site.

This sequence belongs to the AdoMet synthase 2 family. The cofactor is Mg(2+).

The enzyme catalyses L-methionine + ATP + H2O = S-adenosyl-L-methionine + phosphate + diphosphate. Its pathway is amino-acid biosynthesis; S-adenosyl-L-methionine biosynthesis; S-adenosyl-L-methionine from L-methionine: step 1/1. Catalyzes the formation of S-adenosylmethionine from methionine and ATP. The protein is S-adenosylmethionine synthase of Thermococcus gammatolerans (strain DSM 15229 / JCM 11827 / EJ3).